The chain runs to 849 residues: Aminopeptidase N (849 aa).

Substrate is bound by residues E122 and 259-263 (GAMEN). A Zn(2+)-binding site is contributed by H294. The Proton acceptor role is filled by E295. Residues H298 and E317 each contribute to the Zn(2+) site.

This sequence belongs to the peptidase M1 family. Monomer. It depends on Zn(2+) as a cofactor.

Its subcellular location is the cytoplasm. The catalysed reaction is Release of an N-terminal amino acid, Xaa-|-Yaa- from a peptide, amide or arylamide. Xaa is preferably Ala, but may be most amino acids including Pro (slow action). When a terminal hydrophobic residue is followed by a prolyl residue, the two may be released as an intact Xaa-Pro dipeptide.. Aminopeptidase with broad substrate specificity to several peptides. It has more affinity for oligopeptides than for dipeptides. It plays an essential role in the metabolism, it may be involved in nitrogen supply or protein turnover. The protein is Aminopeptidase N (pepN) of Lactococcus lactis subsp. lactis (Streptococcus lactis).